We begin with the raw amino-acid sequence, 361 residues long: Putative agmatine deiminase (361 aa).

The Amidino-cysteine intermediate role is filled by cysteine 354.

The protein belongs to the agmatine deiminase family.

It catalyses the reaction agmatine + H2O = N-carbamoylputrescine + NH4(+). This Streptococcus pneumoniae (strain 70585) protein is Putative agmatine deiminase.